The primary structure comprises 218 residues: Cytochrome c biogenesis ATP-binding export protein CcmA (218 aa).

Residues 2 to 217 (LEAKNLTCIR…KSCLSACCAV (216 aa)) enclose the ABC transporter domain. 34 to 41 (GPNGAGKT) is an ATP binding site.

It belongs to the ABC transporter superfamily. CcmA exporter (TC 3.A.1.107) family. The complex is composed of two ATP-binding proteins (CcmA) and two transmembrane proteins (CcmB).

The protein resides in the cell inner membrane. It catalyses the reaction heme b(in) + ATP + H2O = heme b(out) + ADP + phosphate + H(+). Part of the ABC transporter complex CcmAB involved in the biogenesis of c-type cytochromes; once thought to export heme, this seems not to be the case, but its exact role is uncertain. Responsible for energy coupling to the transport system. The sequence is that of Cytochrome c biogenesis ATP-binding export protein CcmA from Yersinia pseudotuberculosis serotype I (strain IP32953).